Here is a 138-residue protein sequence, read N- to C-terminus: MDFYLDIVSVEKRIFSGLVDRIQVSGSEGEMGIYPGHTQLLSIIKPGVIYIFHKNKTEECLYISGGILEVQPSVVSILADVAIRGIDLDRKRVVKAKKQAEEYFKKETTNVKKDDVLLEISKAIAKLRVLEIMDKFKK.

This sequence belongs to the ATPase epsilon chain family. As to quaternary structure, F-type ATPases have 2 components, CF(1) - the catalytic core - and CF(0) - the membrane proton channel. CF(1) has five subunits: alpha(3), beta(3), gamma(1), delta(1), epsilon(1). CF(0) has three main subunits: a, b and c.

The protein localises to the cell membrane. In terms of biological role, produces ATP from ADP in the presence of a proton gradient across the membrane. This is ATP synthase epsilon chain (atpC) from Buchnera aphidicola subsp. Schizaphis graminum (strain Sg).